We begin with the raw amino-acid sequence, 354 residues long: Short-chain dehydrogenase/reductase SAT2 (354 aa).

Positions 31, 85, 201, and 233 each coordinate NADP(+).

This sequence belongs to the short-chain dehydrogenases/reductases (SDR) family.

It functions in the pathway mycotoxin biosynthesis. Its function is as follows. Short-chain dehydrogenase/reductase; part of the satratoxin SC1 cluster involved in the biosynthesis of satratoxins, trichothecene mycotoxins that are associated with human food poisonings. Satratoxins are suggested to be made by products of multiple gene clusters (SC1, SC2 and SC3) that encode 21 proteins in all, including polyketide synthases, acetyltransferases, and other enzymes expected to modify the trichothecene skeleton. SC1 encodes 10 proteins, SAT1 to SAT10. The largest are SAT8, which encodes a putative polyketide synthase (PKS) with a conventional non-reducing architecture, and SAT10, a putative protein containing four ankyrin repeats and thus may be involved in protein scaffolding. The putative short-chain reductase SAT3 may assist the PKS in some capacity. SAT6 contains a secretory lipase domain and acts probably as a trichothecene esterase. SAT5 encodes a putative acetyltransferase, and so, with SAT6, may affect endogenous protection from toxicity. The probable transcription factor SAT9 may regulate the expression of the SC1 cluster. SC2 encodes proteins SAT11 to SAT16, the largest of which encodes the putative reducing PKS SAT13. SAT11 is a cytochrome P450 monooxygenase, while SAT14 and SAT16 are probable acetyltransferases. The SC2 cluster may be regulated by the transcription factor SAT15. SC3 is a small cluster that encodes 5 proteins, SAT17 to SAT21. SAT21 is a putative MFS-type transporter which may have a role in exporting secondary metabolites. The four other proteins putatively encoded in SC3 include the taurine hydroxylase-like protein SAT17, the O-methyltransferase SAT18, the acetyltransferase SAT19, and the Cys6-type zinc finger SAT20, the latter being probably involved in regulation of SC3 expression. The chain is Short-chain dehydrogenase/reductase SAT2 from Stachybotrys chartarum (strain CBS 109288 / IBT 7711) (Toxic black mold).